A 234-amino-acid chain; its full sequence is Proteasome subunit alpha type-2 (234 aa).

Position 2 is an N-acetylalanine (A2). Phosphotyrosine is present on Y6. Phosphoserine is present on residues S7, S14, and S16. Y24 carries the phosphotyrosine modification. An N6-acetyllysine modification is found at K70. Phosphotyrosine is present on residues Y76 and Y121. Residue K171 is modified to N6-acetyllysine.

The protein belongs to the peptidase T1A family. The 26S proteasome consists of a 20S proteasome core and two 19S regulatory subunits. The 20S proteasome core is a barrel-shaped complex made of 28 subunits that are arranged in four stacked rings. The two outer rings are each formed by seven alpha subunits, and the two inner rings are formed by seven beta subunits. The proteolytic activity is exerted by three beta-subunits PSMB5, PSMB6 and PSMB7. Post-translationally, phosphorylated on tyrosine residues; which may be important for nuclear import. As to expression, detected in liver (at protein level).

The protein resides in the cytoplasm. It is found in the nucleus. Functionally, component of the 20S core proteasome complex involved in the proteolytic degradation of most intracellular proteins. This complex plays numerous essential roles within the cell by associating with different regulatory particles. Associated with two 19S regulatory particles, forms the 26S proteasome and thus participates in the ATP-dependent degradation of ubiquitinated proteins. The 26S proteasome plays a key role in the maintenance of protein homeostasis by removing misfolded or damaged proteins that could impair cellular functions, and by removing proteins whose functions are no longer required. Associated with the PA200 or PA28, the 20S proteasome mediates ubiquitin-independent protein degradation. This type of proteolysis is required in several pathways including spermatogenesis (20S-PA200 complex) or generation of a subset of MHC class I-presented antigenic peptides (20S-PA28 complex). In Mus musculus (Mouse), this protein is Proteasome subunit alpha type-2 (Psma2).